Reading from the N-terminus, the 218-residue chain is Large ribosomal subunit protein uL3 (218 aa).

The protein belongs to the universal ribosomal protein uL3 family. As to quaternary structure, part of the 50S ribosomal subunit. Forms a cluster with proteins L14 and L19.

Functionally, one of the primary rRNA binding proteins, it binds directly near the 3'-end of the 23S rRNA, where it nucleates assembly of the 50S subunit. The chain is Large ribosomal subunit protein uL3 from Syntrophus aciditrophicus (strain SB).